The chain runs to 353 residues: Virulence plasmid protein pGP2-D (353 aa).

This Chlamydia muridarum (strain MoPn / Nigg) protein is Virulence plasmid protein pGP2-D.